We begin with the raw amino-acid sequence, 188 residues long: ATP synthase subunit delta (188 aa).

The protein belongs to the ATPase delta chain family. As to quaternary structure, F-type ATPases have 2 components, F(1) - the catalytic core - and F(0) - the membrane proton channel. F(1) has five subunits: alpha(3), beta(3), gamma(1), delta(1), epsilon(1). F(0) has three main subunits: a(1), b(2) and c(10-14). The alpha and beta chains form an alternating ring which encloses part of the gamma chain. F(1) is attached to F(0) by a central stalk formed by the gamma and epsilon chains, while a peripheral stalk is formed by the delta and b chains.

It is found in the cell inner membrane. Its function is as follows. F(1)F(0) ATP synthase produces ATP from ADP in the presence of a proton or sodium gradient. F-type ATPases consist of two structural domains, F(1) containing the extramembraneous catalytic core and F(0) containing the membrane proton channel, linked together by a central stalk and a peripheral stalk. During catalysis, ATP synthesis in the catalytic domain of F(1) is coupled via a rotary mechanism of the central stalk subunits to proton translocation. In terms of biological role, this protein is part of the stalk that links CF(0) to CF(1). It either transmits conformational changes from CF(0) to CF(1) or is implicated in proton conduction. The polypeptide is ATP synthase subunit delta (Rhizobium meliloti (strain 1021) (Ensifer meliloti)).